The sequence spans 343 residues: Probable dual-specificity RNA methyltransferase RlmN (343 aa).

The active-site Proton acceptor is the E94. The 231-residue stretch at 100–330 (YDSRVTVCVS…ATVRMSMGSD (231 aa)) folds into the Radical SAM core domain. Cysteines 107 and 335 form a disulfide. C114, C118, and C121 together coordinate [4Fe-4S] cluster. S-adenosyl-L-methionine is bound by residues 161-162 (GE), S193, 216-218 (SLH), and N292. Catalysis depends on C335, which acts as the S-methylcysteine intermediate.

Belongs to the radical SAM superfamily. RlmN family. The cofactor is [4Fe-4S] cluster.

It is found in the cytoplasm. It catalyses the reaction adenosine(2503) in 23S rRNA + 2 reduced [2Fe-2S]-[ferredoxin] + 2 S-adenosyl-L-methionine = 2-methyladenosine(2503) in 23S rRNA + 5'-deoxyadenosine + L-methionine + 2 oxidized [2Fe-2S]-[ferredoxin] + S-adenosyl-L-homocysteine. The enzyme catalyses adenosine(37) in tRNA + 2 reduced [2Fe-2S]-[ferredoxin] + 2 S-adenosyl-L-methionine = 2-methyladenosine(37) in tRNA + 5'-deoxyadenosine + L-methionine + 2 oxidized [2Fe-2S]-[ferredoxin] + S-adenosyl-L-homocysteine. Its function is as follows. Specifically methylates position 2 of adenine 2503 in 23S rRNA and position 2 of adenine 37 in tRNAs. This chain is Probable dual-specificity RNA methyltransferase RlmN, found in Clostridioides difficile (strain 630) (Peptoclostridium difficile).